The sequence spans 397 residues: DNA replication and repair protein RecF (397 aa).

30-37 lines the ATP pocket; the sequence is GPNGQGKT.

The protein belongs to the RecF family.

The protein resides in the cytoplasm. Its function is as follows. The RecF protein is involved in DNA metabolism; it is required for DNA replication and normal SOS inducibility. RecF binds preferentially to single-stranded, linear DNA. It also seems to bind ATP. This chain is DNA replication and repair protein RecF, found in Beutenbergia cavernae (strain ATCC BAA-8 / DSM 12333 / CCUG 43141 / JCM 11478 / NBRC 16432 / NCIMB 13614 / HKI 0122).